A 101-amino-acid chain; its full sequence is MMLEHVLVLSAYLFSIGIYGLITSRNMVRALMCLELILNAVNINLVTFSDFFDNRQLKGNIFSIFVIAIAAAEAAIGLAIVSSIYRNRKSTRINQSNLLNK.

The next 3 helical transmembrane spans lie at 2-22, 32-52, and 61-81; these read MLEHVLVLSAYLFSIGIYGLI, MCLELILNAVNINLVTFSDFF, and IFSIFVIAIAAAEAAIGLAIV.

The protein belongs to the complex I subunit 4L family. In terms of assembly, NDH is composed of at least 16 different subunits, 5 of which are encoded in the nucleus.

It localises to the plastid. It is found in the chloroplast thylakoid membrane. It carries out the reaction a plastoquinone + NADH + (n+1) H(+)(in) = a plastoquinol + NAD(+) + n H(+)(out). The enzyme catalyses a plastoquinone + NADPH + (n+1) H(+)(in) = a plastoquinol + NADP(+) + n H(+)(out). Functionally, NDH shuttles electrons from NAD(P)H:plastoquinone, via FMN and iron-sulfur (Fe-S) centers, to quinones in the photosynthetic chain and possibly in a chloroplast respiratory chain. The immediate electron acceptor for the enzyme in this species is believed to be plastoquinone. Couples the redox reaction to proton translocation, and thus conserves the redox energy in a proton gradient. This is NAD(P)H-quinone oxidoreductase subunit 4L, chloroplastic from Cicer arietinum (Chickpea).